We begin with the raw amino-acid sequence, 288 residues long: MFRTAYKTMNQSMVQKFIAGGVGVTGLTASYLLYQDSMTADAMTAAEHGLHPPAYNWPHNGMFETFDHASIRRGFQVYREVCAACHSLDRIAWRNLVGVSHTTSEAKAMAEELEYDDEPDDEGKPRKRPGKLADYIPGPYENEQAARAANQGAYPPDLSLIVKARHGGSDYIFSLLTGYPDEPPAGVVLPEGSNYNPYFPGGAIAMGRVLFDDLVEYEDGTPATTSQMAKDVSTFLNWASEPEHDDRKKWGLKALVVLSSLYLLSIWVKRFKWTPIKNRKFRFDPPKK.

The helical transmembrane segment at 12-34 (SMVQKFIAGGVGVTGLTASYLLY) threads the bilayer. The region spanning 69–222 (ASIRRGFQVY…DLVEYEDGTP (154 aa)) is the Cytochrome c domain. Heme c is bound by residues Cys82, Cys85, and His86. Residues 111-121 (EELEYDDEPDD) are compositionally biased toward acidic residues. Residues 111-138 (EELEYDDEPDDEGKPRKRPGKLADYIPG) are disordered. The chain crosses the membrane as a helical span at residues 250–268 (WGLKALVVLSSLYLLSIWV).

The protein belongs to the cytochrome c family. Component of the ubiquinol-cytochrome c oxidoreductase (cytochrome b-c1 complex, complex III, CIII), a multisubunit enzyme composed of 10 subunits. The complex is composed of 3 respiratory subunits cytochrome b (COB), cytochrome c1 (CYT1) and Rieske protein (RIP1), 2 core protein subunits COR1 and QCR2, and 5 low-molecular weight protein subunits QCR6, QCR7, QCR8, QCR9 and QCR10. The complex exists as an obligatory dimer and forms supercomplexes (SCs) in the inner mitochondrial membrane with a monomer or a dimer of cytochrome c oxidase (complex IV, CIV), resulting in 2 different assemblies (supercomplexes III(2)IV and III(2)IV(2)). Heme c serves as cofactor.

The protein resides in the mitochondrion inner membrane. It carries out the reaction a quinol + 2 Fe(III)-[cytochrome c](out) = a quinone + 2 Fe(II)-[cytochrome c](out) + 2 H(+)(out). In terms of biological role, component of the ubiquinol-cytochrome c oxidoreductase, a multisubunit transmembrane complex that is part of the mitochondrial electron transport chain which drives oxidative phosphorylation. The complex plays an important role in the uptake of multiple carbon sources present in different host niches. The chain is Cytochrome b-c1 complex catalytic subunit, mitochondrial from Candida albicans (strain SC5314 / ATCC MYA-2876) (Yeast).